The primary structure comprises 263 residues: Glucosamine-6-phosphate deaminase (263 aa).

Asp-67 functions as the Proton acceptor; for enolization step in the catalytic mechanism. Asn-136 acts as the For ring-opening step in catalysis. The active-site Proton acceptor; for ring-opening step is the His-138. Glu-143 (for ring-opening step) is an active-site residue.

This sequence belongs to the glucosamine/galactosamine-6-phosphate isomerase family. NagB subfamily. In terms of assembly, homohexamer.

It catalyses the reaction alpha-D-glucosamine 6-phosphate + H2O = beta-D-fructose 6-phosphate + NH4(+). It participates in amino-sugar metabolism; N-acetylneuraminate degradation; D-fructose 6-phosphate from N-acetylneuraminate: step 5/5. Functionally, catalyzes the reversible isomerization-deamination of glucosamine 6-phosphate (GlcN6P) to form fructose 6-phosphate (Fru6P) and ammonium ion. The protein is Glucosamine-6-phosphate deaminase of Cellvibrio japonicus (strain Ueda107) (Pseudomonas fluorescens subsp. cellulosa).